A 149-amino-acid chain; its full sequence is Gamma-glutamylaminecyclotransferase (149 aa).

7 to 10 (YGTL) lines the substrate pocket. The Proton acceptor role is filled by Glu-82.

It belongs to the gamma-glutamylcyclotransferase family. As to quaternary structure, monomer.

It carries out the reaction epsilon-(gamma-L-glutamyl)-L-lysine = 5-oxo-L-proline + L-lysine. Functionally, contributes to degradation of proteins cross-linked by transglutaminases by degrading the cross-link between a lysine and a glutamic acid residue. Catalyzes the formation of 5-oxo-L-proline from L-gamma-glutamyl-L-epsilon-lysine. Inactive with L-gamma-glutamyl-alpha-amino acid substrates such as L-gamma-glutamyl-L-alpha-cysteine and L-gamma-glutamyl-L-alpha-alanine. The protein is Gamma-glutamylaminecyclotransferase (Ggact) of Rattus norvegicus (Rat).